The primary structure comprises 1760 residues: Cilia- and flagella-associated protein 44 (1760 aa).

WD repeat units follow at residues 119 to 160 (GATK…MVLR), 163 to 202 (CHNT…TGLK), 213 to 251 (LEIS…CCFA), 276 to 315 (CHEG…VAEG), and 388 to 427 (FNGG…ELYK). A compositionally biased stretch (basic and acidic residues) spans 1155 to 1165 (RQEEKLREQTA). The interval 1155–1224 (RQEEKLREQT…FGTAAARTRS (70 aa)) is disordered. The segment covering 1181–1190 (PATNTDTSGA) has biased composition (polar residues). Residues 1194–1205 (ATRRSEGEDSRK) are compositionally biased toward basic and acidic residues. A coiled-coil region spans residues 1348–1389 (YDEARNSRDRCLREMEELQRLVQDQTASIEKLQEANKVFRRE). The segment at 1420–1444 (HSDMSGNDDDITSDDDDDDDMGEDE) is disordered. Over residues 1425 to 1444 (GNDDDITSDDDDDDDMGEDE) the composition is skewed to acidic residues.

The protein belongs to the CFAP44 family.

The protein resides in the cell projection. The protein localises to the cilium. It localises to the flagellum. It is found in the cytoplasm. Its subcellular location is the cytoskeleton. The protein resides in the flagellum axoneme. In terms of biological role, flagellar protein involved in flagellum axoneme organization and function. This is Cilia- and flagella-associated protein 44 from Trypanosoma brucei brucei (strain 927/4 GUTat10.1).